The chain runs to 208 residues: GTP cyclohydrolase 1 (208 aa).

Residues C89, H92, and C163 each coordinate Zn(2+).

This sequence belongs to the GTP cyclohydrolase I family. In terms of assembly, homomer.

The enzyme catalyses GTP + H2O = 7,8-dihydroneopterin 3'-triphosphate + formate + H(+). Its pathway is cofactor biosynthesis; 7,8-dihydroneopterin triphosphate biosynthesis; 7,8-dihydroneopterin triphosphate from GTP: step 1/1. The sequence is that of GTP cyclohydrolase 1 from Saccharolobus islandicus (strain Y.N.15.51 / Yellowstone #2) (Sulfolobus islandicus).